A 350-amino-acid polypeptide reads, in one-letter code: Small ribosomal subunit biogenesis GTPase RsgA (350 aa).

The span at 1 to 17 shows a compositional bias: polar residues; the sequence is MSKNKLSKGQQRRVNAN. Residues 1 to 33 are disordered; it reads MSKNKLSKGQQRRVNANHQRRLKTSKEKPDYDD. Residues 104 to 273 enclose the CP-type G domain; that stretch reads TSVLTRPDFY…VIDSPGVREF (170 aa). GTP contacts are provided by residues 160 to 163 and 214 to 222; these read NKID and GQSGVGKSS. The Zn(2+) site is built by Cys297, Cys302, His304, and Cys310.

This sequence belongs to the TRAFAC class YlqF/YawG GTPase family. RsgA subfamily. Monomer. Associates with 30S ribosomal subunit, binds 16S rRNA. The cofactor is Zn(2+).

The protein resides in the cytoplasm. Its function is as follows. One of several proteins that assist in the late maturation steps of the functional core of the 30S ribosomal subunit. Helps release RbfA from mature subunits. May play a role in the assembly of ribosomal proteins into the subunit. Circularly permuted GTPase that catalyzes slow GTP hydrolysis, GTPase activity is stimulated by the 30S ribosomal subunit. The protein is Small ribosomal subunit biogenesis GTPase RsgA of Escherichia fergusonii (strain ATCC 35469 / DSM 13698 / CCUG 18766 / IAM 14443 / JCM 21226 / LMG 7866 / NBRC 102419 / NCTC 12128 / CDC 0568-73).